Reading from the N-terminus, the 57-residue chain is Sperm protamine P1-type (57 aa).

A disordered region spans residues 1–57; that stretch reads MARYRHNRSRSRSRHRRRRRGHRGGRYRRRRRRGRYGHRRHHRGHSRRRRKRRRSRH.

It belongs to the protamine P1 family. As to expression, testis.

It localises to the nucleus. It is found in the chromosome. Functionally, protamines substitute for histones in the chromatin of sperm during the haploid phase of spermatogenesis. They compact sperm DNA into a highly condensed, stable and inactive complex. The sequence is that of Sperm protamine P1-type from Alligator mississippiensis (American alligator).